The chain runs to 156 residues: Small ribosomal subunit protein uS7 (156 aa).

The protein belongs to the universal ribosomal protein uS7 family. Part of the 30S ribosomal subunit. Contacts proteins S9 and S11.

Its function is as follows. One of the primary rRNA binding proteins, it binds directly to 16S rRNA where it nucleates assembly of the head domain of the 30S subunit. Is located at the subunit interface close to the decoding center, probably blocks exit of the E-site tRNA. This is Small ribosomal subunit protein uS7 from Edwardsiella ictaluri (strain 93-146).